A 294-amino-acid chain; its full sequence is MAAAYPWTLFLGMLVMVSGTMGAALRKPVDVAFGRNYVPTWAFDHIKYFNGGNEIQLHLDKYTGTGFQSKGSYLFGHFSMQMKLVPGDSAGTVTAFYLSSQNSEHDEIDFEFLGNRTGQPYILQTNVFTGGKGDREQRIYLWFDPTKEFHYYSVLWNMYMIVFLVDDVPIRVFKNCKDLGVKFPFNQPMKIYSSLWNADDWATRGGLEKTDWSKAPFIASYRSFHIDGCEASVEAKFCATQGARWWDQKEFQDLDAFQYRRLSWVRQKYTIYNYCTDRSRYPSMPPECKRDRDI.

The N-terminal stretch at 1–22 is a signal peptide; sequence MAAAYPWTLFLGMLVMVSGTMG. The 199-residue stretch at 23–221 folds into the GH16 domain; sequence AALRKPVDVA…WSKAPFIASY (199 aa). Glu-107 acts as the Nucleophile in catalysis. Glu-111 serves as the catalytic Proton donor. Glu-111 serves as a coordination point for xyloglucan. A glycan (N-linked (GlcNAc...) asparagine) is linked at Asn-115. Xyloglucan-binding positions include 124–126, 134–136, 200–201, and Gly-205; these read QTN, DRE, and DW. Disulfide bonds link Cys-229–Cys-238 and Cys-275–Cys-288. Residue Arg-280 coordinates xyloglucan.

Belongs to the glycosyl hydrolase 16 family. XTH group 1 subfamily. Post-translationally, contains at least one intrachain disulfide bond essential for its enzymatic activity. N-glycosylated. Contains N-acetylglucosamine and mannose. Glycosylation is not essential for its catalytic activity. Expressed in mature gelatinous (G) cell wall layer of the tension wood fibers. Highly expressed in the outer zone of the G layer close to the secondary S2 layer. Not expressed in the mature walls of the ray cells or vessel elements (at protein level). Highest expression in both the phloem/cambium and differentiating xylem of the mature stem containing primarily secondary cell wall forming cells, in root tips and young roots. Expressed at low levels in apical bud.

The protein resides in the secreted. The protein localises to the cell wall. Its subcellular location is the extracellular space. It localises to the apoplast. It is found in the cytoplasm. It catalyses the reaction breaks a beta-(1-&gt;4) bond in the backbone of a xyloglucan and transfers the xyloglucanyl segment on to O-4 of the non-reducing terminal glucose residue of an acceptor, which can be a xyloglucan or an oligosaccharide of xyloglucan.. Its function is as follows. Catalyzes xyloglucan endotransglycosylation (XET). Cleaves and religates xyloglucan polymers. Does not catalyze xyloglucan endohydrolysis (XEH). Involved in early phases of secondary (S) cell wall formation in fibers of the xylem and phloem vascular tissues of wood stems. May play a role in restructuring primary cell walls, possibly creating and reinforcing the connections between the primary and S cell wall layers. Functions in the gelatinous (G) layers of the tension wood fibers that are involved in bending of the wood stems. May play a role in G fiber shrinking by repairing broken xyloglucan cross-links between G and S2 cell wall layers via its XET activity to maintain connections between the layers. The sequence is that of Xyloglucan endotransglucosylase protein 34 from Populus tremula x Populus tremuloides (Hybrid aspen).